A 166-amino-acid chain; its full sequence is 2-amino-4-hydroxy-6-hydroxymethyldihydropteridine pyrophosphokinase (166 aa).

Belongs to the HPPK family.

The enzyme catalyses 6-hydroxymethyl-7,8-dihydropterin + ATP = (7,8-dihydropterin-6-yl)methyl diphosphate + AMP + H(+). Its pathway is cofactor biosynthesis; tetrahydrofolate biosynthesis; 2-amino-4-hydroxy-6-hydroxymethyl-7,8-dihydropteridine diphosphate from 7,8-dihydroneopterin triphosphate: step 4/4. Functionally, catalyzes the transfer of pyrophosphate from adenosine triphosphate (ATP) to 6-hydroxymethyl-7,8-dihydropterin, an enzymatic step in folate biosynthesis pathway. The chain is 2-amino-4-hydroxy-6-hydroxymethyldihydropteridine pyrophosphokinase (folK) from Streptococcus pyogenes serotype M6 (strain ATCC BAA-946 / MGAS10394).